The following is a 308-amino-acid chain: Cell division protein ZipA (308 aa).

Topologically, residues Met-1–Arg-5 are periplasmic. A helical transmembrane segment spans residues Leu-6 to Thr-26. Topologically, residues Ser-27–Asn-308 are cytoplasmic. The interval Phe-43–Phe-90 is disordered. The segment covering Glu-59 to Pro-82 has biased composition (basic and acidic residues).

It belongs to the ZipA family. Interacts with FtsZ via their C-terminal domains.

The protein resides in the cell inner membrane. Its function is as follows. Essential cell division protein that stabilizes the FtsZ protofilaments by cross-linking them and that serves as a cytoplasmic membrane anchor for the Z ring. Also required for the recruitment to the septal ring of downstream cell division proteins. This Aliivibrio salmonicida (strain LFI1238) (Vibrio salmonicida (strain LFI1238)) protein is Cell division protein ZipA.